The chain runs to 335 residues: uncharacterized protein (335 aa).

2 disordered regions span residues 152–179 (IQLPDRMPKTTNGTLADPNMPPKTTVND) and 252–271 (LDLFGSPSSENKSTAGSASL). Phosphoserine occurs at positions 257 and 260. A compositionally biased stretch (polar residues) spans 257–271 (SPSSENKSTAGSASL).

This is an uncharacterized protein from Schizosaccharomyces pombe (strain 972 / ATCC 24843) (Fission yeast).